Consider the following 375-residue polypeptide: Anhydro-N-acetylmuramic acid kinase 1 (375 aa).

Glycine 20–aspartate 27 contacts ATP. Residues alanine 351–serine 375 are disordered.

Belongs to the anhydro-N-acetylmuramic acid kinase family.

The enzyme catalyses 1,6-anhydro-N-acetyl-beta-muramate + ATP + H2O = N-acetyl-D-muramate 6-phosphate + ADP + H(+). The protein operates within amino-sugar metabolism; 1,6-anhydro-N-acetylmuramate degradation. Its pathway is cell wall biogenesis; peptidoglycan recycling. In terms of biological role, catalyzes the specific phosphorylation of 1,6-anhydro-N-acetylmuramic acid (anhMurNAc) with the simultaneous cleavage of the 1,6-anhydro ring, generating MurNAc-6-P. Is required for the utilization of anhMurNAc either imported from the medium or derived from its own cell wall murein, and thus plays a role in cell wall recycling. The chain is Anhydro-N-acetylmuramic acid kinase 1 from Jannaschia sp. (strain CCS1).